A 126-amino-acid chain; its full sequence is Alpha-lactalbumin (126 aa).

A C-type lysozyme domain is found at 1–126 (KVFEKCELSQ…CIADLDQWKC (126 aa)). Intrachain disulfides connect cysteine 6-cysteine 126, cysteine 30-cysteine 117, cysteine 63-cysteine 82, and cysteine 78-cysteine 96. Asparagine 47 is a glycosylation site (N-linked (GlcNAc...) asparagine). The Ca(2+) site is built by lysine 84, aspartate 87, aspartate 89, aspartate 92, and aspartate 93.

The protein belongs to the glycosyl hydrolase 22 family. In terms of assembly, lactose synthase (LS) is a heterodimer of a catalytic component, beta1,4-galactosyltransferase (beta4Gal-T1) and a regulatory component, alpha-lactalbumin (LA). In terms of tissue distribution, mammary gland specific. Secreted in milk.

The protein resides in the secreted. Its function is as follows. Regulatory subunit of lactose synthase, changes the substrate specificity of galactosyltransferase in the mammary gland making glucose a good acceptor substrate for this enzyme. This enables LS to synthesize lactose, the major carbohydrate component of milk. In other tissues, galactosyltransferase transfers galactose onto the N-acetylglucosamine of the oligosaccharide chains in glycoproteins. This is Alpha-lactalbumin (LALBA) from Tachyglossus aculeatus aculeatus (Southeast Australian short-beaked echidna).